The primary structure comprises 293 residues: Elongation factor Ts (293 aa).

The interval 80–83 (TDFV) is involved in Mg(2+) ion dislocation from EF-Tu.

Belongs to the EF-Ts family.

The protein localises to the cytoplasm. Its function is as follows. Associates with the EF-Tu.GDP complex and induces the exchange of GDP to GTP. It remains bound to the aminoacyl-tRNA.EF-Tu.GTP complex up to the GTP hydrolysis stage on the ribosome. In Herminiimonas arsenicoxydans, this protein is Elongation factor Ts.